A 519-amino-acid chain; its full sequence is Methionine--tRNA ligase (519 aa).

Positions 11 to 21 match the 'HIGH' region motif; it reads AYPNAAPHVGH. The short motif at 299–303 is the 'KMSKS' region element; sequence KMSKS. Lys302 is a binding site for ATP. The disordered stretch occupies residues 500–519; it reads LPPPTGVFPRYQPPQPPEGK.

Belongs to the class-I aminoacyl-tRNA synthetase family. MetG type 2B subfamily. As to quaternary structure, monomer.

It is found in the cytoplasm. The enzyme catalyses tRNA(Met) + L-methionine + ATP = L-methionyl-tRNA(Met) + AMP + diphosphate. Functionally, is required not only for elongation of protein synthesis but also for the initiation of all mRNA translation through initiator tRNA(fMet) aminoacylation. This is Methionine--tRNA ligase (metG) from Mycobacterium tuberculosis (strain CDC 1551 / Oshkosh).